Reading from the N-terminus, the 843-residue chain is Eisosome protein 1 (843 aa).

An N-acetylserine modification is found at S2. Residue S2 is modified to Phosphoserine. The segment at 13–44 is disordered; that stretch reads HNIGKTSGGGSRTSSITSSKKSLKHGSKSLRK. A compositionally biased stretch (basic residues) spans 33–44; the sequence is KSLKHGSKSLRK. Phosphoserine is present on residues S88 and S130. The interval 120–174 is disordered; that stretch reads KMGPKVVRNNSITSATSKTSKESQTKRKSKESPGAAASKAYSMTMETTSLSSQTN. 2 stretches are compositionally biased toward polar residues: residues 127 to 137 and 163 to 174; these read RNNSITSATSK and TMETTSLSSQTN. Phosphoserine is present on residues S182, S401, S584, and S710. Residues 717–843 are disordered; that stretch reads DLPTQLEKIE…QDAISNQEKK (127 aa). Residue T720 is modified to Phosphothreonine. Over residues 752–764 the composition is skewed to low complexity; it reads STAAKEATETSSA. Phosphoserine is present on residues S763 and S775. Positions 781–797 are enriched in basic and acidic residues; that stretch reads SGKEDANDCKSAEHSKE. A compositionally biased stretch (polar residues) spans 798 to 810; sequence ISVSQKAGNNKSL. S816, S828, S829, and S838 each carry phosphoserine.

It belongs to the EIS1 family.

The protein localises to the cytoplasmic granule. It is found in the cell membrane. Functionally, required for normal formation of eisosomes, large cytoplasmic protein assemblies that localize to specialized domains on plasma membrane and mark the site of endocytosis. The chain is Eisosome protein 1 (EIS1) from Saccharomyces cerevisiae (strain Lalvin EC1118 / Prise de mousse) (Baker's yeast).